A 364-amino-acid polypeptide reads, in one-letter code: UDP-N-acetylglucosamine--N-acetylmuramyl-(pentapeptide) pyrophosphoryl-undecaprenol N-acetylglucosamine transferase (364 aa).

Residues Thr-10–Gly-12, Asn-124, Ser-195, Ile-250, and Gln-295 contribute to the UDP-N-acetyl-alpha-D-glucosamine site.

This sequence belongs to the glycosyltransferase 28 family. MurG subfamily.

The protein resides in the cell membrane. The enzyme catalyses di-trans,octa-cis-undecaprenyl diphospho-N-acetyl-alpha-D-muramoyl-L-alanyl-D-glutamyl-meso-2,6-diaminopimeloyl-D-alanyl-D-alanine + UDP-N-acetyl-alpha-D-glucosamine = di-trans,octa-cis-undecaprenyl diphospho-[N-acetyl-alpha-D-glucosaminyl-(1-&gt;4)]-N-acetyl-alpha-D-muramoyl-L-alanyl-D-glutamyl-meso-2,6-diaminopimeloyl-D-alanyl-D-alanine + UDP + H(+). Its pathway is cell wall biogenesis; peptidoglycan biosynthesis. In terms of biological role, cell wall formation. Catalyzes the transfer of a GlcNAc subunit on undecaprenyl-pyrophosphoryl-MurNAc-pentapeptide (lipid intermediate I) to form undecaprenyl-pyrophosphoryl-MurNAc-(pentapeptide)GlcNAc (lipid intermediate II). This is UDP-N-acetylglucosamine--N-acetylmuramyl-(pentapeptide) pyrophosphoryl-undecaprenol N-acetylglucosamine transferase from Bacillus cytotoxicus (strain DSM 22905 / CIP 110041 / 391-98 / NVH 391-98).